Reading from the N-terminus, the 305-residue chain is MSIPSGTEPQIKRFSVTADPDTIFQAYQEDGVVIIQGFLSPEQLDKFNREVNPRLAHQRQGYQPSLKARLMEGSLSALLPPQQKRVHNLAGFSKVFRHDILNHGLMHELCRRAFAATGDYWLSSGAVIENGPGTPEQGWHRDQPSYPVIQAGPGTAEGMVNFFTALTDFTAEAGATQFMHGSHKVVGIPDGDPNHPMLIAEMKAGDSVLLSGKLVHRGGLNNTSDFFRRALSLAISPCVLTPYESSIHLSRPLVESMTPLAQRMIAWRSASIPPPYQIGMWTLNMNEVGEEMGLKYNQPYDEDEE.

Residues His-140, Asp-142, and His-216 each coordinate Fe cation.

Belongs to the PhyH family. Fe cation is required as a cofactor.

It functions in the pathway secondary metabolite biosynthesis. Functionally, dioxygenase; part of the gene cluster that mediates the biosynthesis of hancockiamides, an unusual new family of N-cinnamoylated piperazines. The NRPS hkm10 and the NmrA-like reductase hkm9 are proposed to convert two molecules of L-Phe to the intermediary piperazine called xenocockiamide A. Xenocockiamide A is then converted to hancockiamide D via a series of hydroxylations and O-methylations. The tyrosinase hkm6 may catalyze an aromatic hydroxylation, then the 2-oxoglutarate-dependent Fe(II) dioxygenase hkm4 and the FAD-dependent phenol hydroxylase hkm7 may catalyze consecutive hydroxylations to install 2 more hydroxy groups, and the methyltransferase hkm8 probably catalyzes two methylations using 2 molecules of S-adenosyl-L-methionine (SAM). The NRPS hkm11 activates and transfers trans-cinnamate supplied by the PAL hkm12 to hancockiamide D and produces hancockiamide A. NRPS Hkm11 has the flexibility to tolerate the bulky hancockiamide G as a substrate and the absence of the acetyl-transferase hkm3 opens up the opportunity for hkm11 to introduce a second N-cinnamoyl moiety. The cytochrome P450 monooxygenase hkm5 catalyzes the methylenedioxy bridge formation, converting hancockiamide A into hancockiamide G. Hkm5 can also convert hancockiamide B into hancockiamide C, and hancockiamide D into hancockiamide H. The N-acetyltransferase hkm3 finally transfers an acetyl group to 1-N of piperazine, converting hancockiamide A into hancockiamide B and hancockiamide G into hancockiamide C. This chain is Dioxygenase hkm4, found in Aspergillus hancockii.